The sequence spans 123 residues: Small ribosomal subunit protein eS25 (123 aa).

Basic and acidic residues predominate over residues 1-13 (MPPKKDTKGDSKK). The tract at residues 1–34 (MPPKKDTKGDSKKGQKAKAGSGGGKAKKKKWSKG) is disordered. Residues 25-34 (KAKKKKWSKG) show a composition bias toward basic residues.

Belongs to the eukaryotic ribosomal protein eS25 family.

In Branchiostoma belcheri (Amphioxus), this protein is Small ribosomal subunit protein eS25 (RPS25).